The sequence spans 313 residues: Aspartate carbamoyltransferase catalytic subunit (313 aa).

Residues R58 and T59 each contribute to the carbamoyl phosphate site. K86 contributes to the L-aspartate binding site. R108, H136, and Q139 together coordinate carbamoyl phosphate. L-aspartate is bound by residues R169 and R223. G264 and P265 together coordinate carbamoyl phosphate.

It belongs to the aspartate/ornithine carbamoyltransferase superfamily. ATCase family. Heterododecamer (2C3:3R2) of six catalytic PyrB chains organized as two trimers (C3), and six regulatory PyrI chains organized as three dimers (R2).

It catalyses the reaction carbamoyl phosphate + L-aspartate = N-carbamoyl-L-aspartate + phosphate + H(+). It participates in pyrimidine metabolism; UMP biosynthesis via de novo pathway; (S)-dihydroorotate from bicarbonate: step 2/3. Catalyzes the condensation of carbamoyl phosphate and aspartate to form carbamoyl aspartate and inorganic phosphate, the committed step in the de novo pyrimidine nucleotide biosynthesis pathway. The sequence is that of Aspartate carbamoyltransferase catalytic subunit from Ruminiclostridium cellulolyticum (strain ATCC 35319 / DSM 5812 / JCM 6584 / H10) (Clostridium cellulolyticum).